A 344-amino-acid chain; its full sequence is N-acetyl-gamma-glutamyl-phosphate reductase (344 aa).

Cysteine 148 is a catalytic residue.

The protein belongs to the NAGSA dehydrogenase family. Type 1 subfamily.

The protein resides in the cytoplasm. The catalysed reaction is N-acetyl-L-glutamate 5-semialdehyde + phosphate + NADP(+) = N-acetyl-L-glutamyl 5-phosphate + NADPH + H(+). The protein operates within amino-acid biosynthesis; L-arginine biosynthesis; N(2)-acetyl-L-ornithine from L-glutamate: step 3/4. Catalyzes the NADPH-dependent reduction of N-acetyl-5-glutamyl phosphate to yield N-acetyl-L-glutamate 5-semialdehyde. In Geobacillus kaustophilus (strain HTA426), this protein is N-acetyl-gamma-glutamyl-phosphate reductase.